Here is a 425-residue protein sequence, read N- to C-terminus: Protein CLP1 homolog (425 aa).

ATP-binding positions include glutamate 18, lysine 59, and 121–126 (DVGKST).

It belongs to the Clp1 family. Clp1 subfamily.

The protein resides in the nucleus. Its function is as follows. Required for endonucleolytic cleavage during polyadenylation-dependent pre-mRNA 3'-end formation. This chain is Protein CLP1 homolog (cbc), found in Drosophila grimshawi (Hawaiian fruit fly).